Consider the following 181-residue polypeptide: ATP synthase subunit b (181 aa).

Residues 12-32 (LPAVYDIVWSAVVFVVLLVVI) form a helical membrane-spanning segment.

This sequence belongs to the ATPase B chain family. In terms of assembly, F-type ATPases have 2 components, F(1) - the catalytic core - and F(0) - the membrane proton channel. F(1) has five subunits: alpha(3), beta(3), gamma(1), delta(1), epsilon(1). F(0) has three main subunits: a(1), b(2) and c(10-14). The alpha and beta chains form an alternating ring which encloses part of the gamma chain. F(1) is attached to F(0) by a central stalk formed by the gamma and epsilon chains, while a peripheral stalk is formed by the delta and b chains.

It localises to the cell membrane. In terms of biological role, f(1)F(0) ATP synthase produces ATP from ADP in the presence of a proton or sodium gradient. F-type ATPases consist of two structural domains, F(1) containing the extramembraneous catalytic core and F(0) containing the membrane proton channel, linked together by a central stalk and a peripheral stalk. During catalysis, ATP synthesis in the catalytic domain of F(1) is coupled via a rotary mechanism of the central stalk subunits to proton translocation. Component of the F(0) channel, it forms part of the peripheral stalk, linking F(1) to F(0). The protein is ATP synthase subunit b of Clavibacter sepedonicus (Clavibacter michiganensis subsp. sepedonicus).